Here is a 179-residue protein sequence, read N- to C-terminus: Adenine phosphoribosyltransferase (179 aa).

This sequence belongs to the purine/pyrimidine phosphoribosyltransferase family. In terms of assembly, homodimer.

The protein localises to the cytoplasm. The catalysed reaction is AMP + diphosphate = 5-phospho-alpha-D-ribose 1-diphosphate + adenine. The protein operates within purine metabolism; AMP biosynthesis via salvage pathway; AMP from adenine: step 1/1. Its function is as follows. Catalyzes a salvage reaction resulting in the formation of AMP, that is energically less costly than de novo synthesis. The chain is Adenine phosphoribosyltransferase from Methylacidiphilum infernorum (isolate V4) (Methylokorus infernorum (strain V4)).